Consider the following 293-residue polypeptide: Probable metal transport system membrane protein CT_417 (293 aa).

7 helical membrane passes run 18–38 (SLLAAFGASIAAGIIGSYIVV), 41–61 (IVSISGSIAHSILGGVGIALW), 68–88 (LPISPLHGAIASAIFVAICIG), 101–121 (IISMIWSIGMAIGIICISKLP), 135–155 (ILWVTPQDLYFLGILDLFIVA), 187–207 (LLLILTAITTVVLMYVMGVIL), and 242–262 (FLGIMLAYLLDLPVGPVIAIL).

This sequence belongs to the ABC-3 integral membrane protein family.

Its subcellular location is the cell inner membrane. Its function is as follows. Part of an ATP-driven transport system CT_415/CT_416/CT_417 for a metal. In Chlamydia trachomatis serovar D (strain ATCC VR-885 / DSM 19411 / UW-3/Cx), this protein is Probable metal transport system membrane protein CT_417.